The sequence spans 305 residues: D-alanine--D-alanine ligase (305 aa).

Residues 107–299 (KKMLCYHGIA…FDELVERILA (193 aa)) enclose the ATP-grasp domain. 134–186 (PDYPLVVKPAREGSTIGISIVHDEQELAAGLEEAFRHDDLVLVEQFIAGAEVT) contributes to the ATP binding site. The Mg(2+) site is built by Asp254, Glu266, and Asn268.

Belongs to the D-alanine--D-alanine ligase family. Mg(2+) is required as a cofactor. The cofactor is Mn(2+).

It is found in the cytoplasm. It catalyses the reaction 2 D-alanine + ATP = D-alanyl-D-alanine + ADP + phosphate + H(+). It functions in the pathway cell wall biogenesis; peptidoglycan biosynthesis. Cell wall formation. The polypeptide is D-alanine--D-alanine ligase (Syntrophotalea carbinolica (strain DSM 2380 / NBRC 103641 / GraBd1) (Pelobacter carbinolicus)).